The primary structure comprises 41 residues: Plantazolicin (41 aa).

The propeptide occupies 1 to 27 (MTKITIPTALSAKVHGEGQHLFEPMAA). Arginine 28 bears the N2,N2-dimethylarginine; in form plantazolicin A mark. The segment at residues 28 to 29 (RC) is a cross-link (thiazole-4-carboxylic acid (Arg-Cys)). Cross-links (5-methyloxazole-4-carboxylic acid (Cys-Thr)) lie at residues 29–30 (CT) and 31–32 (CT). A cross-link (thiazole-4-carboxylic acid (Thr-Cys)) is located at residues 30-31 (TC). The 5-methyloxazole-4-carboxylic acid (Thr-Thr) cross-link spans 32–33 (TT). The oxazole-4-carboxylic acid (Ile-Ser) cross-link spans 35–36 (IS). Cross-links (oxazole-4-carboxylic acid (Ser-Ser)) lie at residues 36–37 (SS), 37–38 (SS), and 38–39 (SS). Positions 39–40 (ST) form a cross-link, 5-methyloxazoline-4-carboxylic acid (Ser-Thr).

In terms of processing, maturation of thiazole and oxazole containing antibiotics involves the enzymatic condensation of a Cys, Ser or Thr with the alpha-carbonyl of the preceding amino acid to form a thioether or ether bond, then dehydration to form a double bond with the alpha-amino nitrogen. Thiazoline or oxazoline ring are dehydrogenated to form thiazole or oxazole rings.

It is found in the secreted. The protein localises to the cell wall. Peptide antibiotic inhibiting growth of Gram-positive bacteria. The mode of action appears to be disruption of cell walls and lysis of cells. The sequence is that of Plantazolicin from Bacillus pumilus (strain ATCC 7061 / DSM 27 / CCUG 26015 / JCM 2508 / NBRC 12092 / NCIMB 9369 / NCTC 10337 / NRRL NRS-272 / CCM 2144).